We begin with the raw amino-acid sequence, 356 residues long: 3-dehydroquinate synthase (356 aa).

NAD(+) is bound by residues 106–110, 130–131, lysine 143, and lysine 152; these read GVVGD and TT. Positions 185, 248, and 265 each coordinate Zn(2+).

The protein belongs to the sugar phosphate cyclases superfamily. Dehydroquinate synthase family. It depends on NAD(+) as a cofactor. Co(2+) serves as cofactor. Requires Zn(2+) as cofactor.

The protein resides in the cytoplasm. The enzyme catalyses 7-phospho-2-dehydro-3-deoxy-D-arabino-heptonate = 3-dehydroquinate + phosphate. It participates in metabolic intermediate biosynthesis; chorismate biosynthesis; chorismate from D-erythrose 4-phosphate and phosphoenolpyruvate: step 2/7. In terms of biological role, catalyzes the conversion of 3-deoxy-D-arabino-heptulosonate 7-phosphate (DAHP) to dehydroquinate (DHQ). This chain is 3-dehydroquinate synthase, found in Caldanaerobacter subterraneus subsp. tengcongensis (strain DSM 15242 / JCM 11007 / NBRC 100824 / MB4) (Thermoanaerobacter tengcongensis).